The following is a 164-amino-acid chain: MPKLIWIPESVVEAMLKDASRWHDLETGGTFMGYWSDANVAVITKMIDGGSEAIRTRKSFSPDREWEQSEIDRHYRVSGRVDTYIGDWHTHPNAQSGEPSWTDRRCLRTIIRSPEARAPRPVMILLCGGPENWLPHAWIGQLTRRALLFERVETTAATISTYKT.

Residues 5-142 form the MPN domain; that stretch reads IWIPESVVEA…WLPHAWIGQL (138 aa). Zn(2+) is bound by residues H89, H91, and D103.

This sequence belongs to the peptidase M67B family.

In Sinorhizobium fredii (strain NBRC 101917 / NGR234), this protein is Probable metalloprotease y4qB.